The primary structure comprises 654 residues: uncharacterized protein (654 aa).

The span at 1-13 (MSNLILTPSNNGT) shows a compositional bias: polar residues. The disordered stretch occupies residues 1-23 (MSNLILTPSNNGTERPYRSRKTR). The zn(2)-C6 fungal-type DNA-binding region spans 25-54 (CDNCRLRKSRCVVESIGNPCLLCTQLKIPC). The interval 63–96 (RNKQKKQQDSVSDDTPSEATTTTNDDRDPKYNAL) is disordered.

It localises to the cytoplasm. The protein resides in the nucleus. This is an uncharacterized protein from Schizosaccharomyces pombe (strain 972 / ATCC 24843) (Fission yeast).